We begin with the raw amino-acid sequence, 395 residues long: ATP synthase subunit beta, chloroplastic (395 aa).

72–79 (GGAGVGKT) contacts ATP.

It belongs to the ATPase alpha/beta chains family. In terms of assembly, F-type ATPases have 2 components, CF(1) - the catalytic core - and CF(0) - the membrane proton channel. CF(1) has five subunits: alpha(3), beta(3), gamma(1), delta(1), epsilon(1). CF(0) has four main subunits: a(1), b(1), b'(1) and c(9-12).

The protein resides in the plastid. It is found in the chloroplast thylakoid membrane. It catalyses the reaction ATP + H2O + 4 H(+)(in) = ADP + phosphate + 5 H(+)(out). Produces ATP from ADP in the presence of a proton gradient across the membrane. The catalytic sites are hosted primarily by the beta subunits. The chain is ATP synthase subunit beta, chloroplastic from Microlepia platyphylla (Plate fern).